Here is a 568-residue protein sequence, read N- to C-terminus: Circadian clock protein KaiC2 (568 aa).

2 KaiC domains span residues 11–250 (IKCP…SVSQ) and 251–485 (ERIS…LTGT). Residues serine 423 and serine 424 each carry the phosphoserine; by autocatalysis modification.

This sequence belongs to the KaiC family. As to quaternary structure, multimerizes, probably forming homohexamers, no interaction with KaiC1 or KaiC3 is seen.

The enzyme catalyses L-seryl-[protein] + ATP = O-phospho-L-seryl-[protein] + ADP + H(+). The catalysed reaction is L-threonyl-[protein] + ATP = O-phospho-L-threonyl-[protein] + ADP + H(+). It catalyses the reaction ATP + H2O = ADP + phosphate + H(+). Its function is as follows. Autophosphorylates independently of KaiA. This Synechocystis sp. (strain ATCC 27184 / PCC 6803 / Kazusa) protein is Circadian clock protein KaiC2.